Reading from the N-terminus, the 340-residue chain is Anthranilate phosphoribosyltransferase (340 aa).

Residues G78, 81–82, T86, 88–91, 106–114, and S118 contribute to the 5-phospho-alpha-D-ribose 1-diphosphate site; these read GD, NIST, and KHGNRSVSS. G78 is an anthranilate binding site. S90 provides a ligand contact to Mg(2+). N109 contacts anthranilate. R164 contacts anthranilate. Mg(2+) is bound by residues D223 and E224.

The protein belongs to the anthranilate phosphoribosyltransferase family. Homodimer. Mg(2+) serves as cofactor.

It catalyses the reaction N-(5-phospho-beta-D-ribosyl)anthranilate + diphosphate = 5-phospho-alpha-D-ribose 1-diphosphate + anthranilate. Its pathway is amino-acid biosynthesis; L-tryptophan biosynthesis; L-tryptophan from chorismate: step 2/5. Catalyzes the transfer of the phosphoribosyl group of 5-phosphorylribose-1-pyrophosphate (PRPP) to anthranilate to yield N-(5'-phosphoribosyl)-anthranilate (PRA). In Bacillus pumilus (Bacillus mesentericus), this protein is Anthranilate phosphoribosyltransferase.